The sequence spans 168 residues: UPF0262 protein BRADO6636 (168 aa).

The protein belongs to the UPF0262 family.

The polypeptide is UPF0262 protein BRADO6636 (Bradyrhizobium sp. (strain ORS 278)).